An 86-amino-acid polypeptide reads, in one-letter code: Large ribosomal subunit protein bL31B (86 aa).

The protein belongs to the bacterial ribosomal protein bL31 family. Type B subfamily. As to quaternary structure, part of the 50S ribosomal subunit.

In Streptococcus equi subsp. zooepidemicus (strain H70), this protein is Large ribosomal subunit protein bL31B.